The following is a 364-amino-acid chain: MQESGLKPILWKNKELILLDQRVLPGTTSYITAKTLEDCIFAIREMVVRGAPAIAITGAFGITLYWNSLVSKPSFSELKLKLSELLESRPTAVNLRLAIEEFSSRFPESNYSSFSLEEIQKGAEELALFMLSEDLENNLTLSKYALSLFPKQPSSLNIITHCNTGALATAGHGTALGVIRSLRDAGHSLTVFADETRPYLQGARLTAWELQEEKIQSFLITDNMAGWVMSSRKIDAVIVGADRIASNGDTANKIGTYPLAIVAKHHGVPFYVAATAKSMDFRIPNGSYIPIEMRKEEEITSFGFLKDSDGKPLLKEGVIAPKGMKALNPSFDVTPASLITGIITEKGIVSPVTEENLKKIFQLI.

Residues 49 to 51 (RGA), Arg-89, and Gln-201 each bind substrate. The active-site Proton donor is the Asp-242. 252 to 253 (NK) is a binding site for substrate.

Belongs to the eIF-2B alpha/beta/delta subunits family. MtnA subfamily.

It carries out the reaction 5-(methylsulfanyl)-alpha-D-ribose 1-phosphate = 5-(methylsulfanyl)-D-ribulose 1-phosphate. It participates in amino-acid biosynthesis; L-methionine biosynthesis via salvage pathway; L-methionine from S-methyl-5-thio-alpha-D-ribose 1-phosphate: step 1/6. Its function is as follows. Catalyzes the interconversion of methylthioribose-1-phosphate (MTR-1-P) into methylthioribulose-1-phosphate (MTRu-1-P). The chain is Methylthioribose-1-phosphate isomerase from Leptospira interrogans serogroup Icterohaemorrhagiae serovar Lai (strain 56601).